We begin with the raw amino-acid sequence, 652 residues long: Bifunctional protein ThiO/ThiG (652 aa).

A thiO region spans residues 1–366; sequence MTRDIVIIGG…HYSRFQKQAS (366 aa). FAD contacts are provided by residues 5 to 19 and 44 to 46; these read IVII…AIAV and AGM. Glu52 serves as a coordination point for glycine. Residue Val173 coordinates FAD. 2 residues coordinate glycine: Arg301 and Arg327. 325–331 lines the FAD pocket; it reads HYRNGIL. The thiG stretch occupies residues 393-652; the sequence is SLIIAGKSFH…ASSPVTGTIS (260 aa). The active-site Schiff-base intermediate with DXP is the Lys494. 1-deoxy-D-xylulose 5-phosphate is bound by residues Gly555, 581–582, and 603–604; these read AG and NS.

The protein in the N-terminal section; belongs to the DAO family. ThiO subfamily. This sequence in the C-terminal section; belongs to the ThiG family. Interacts with ThiH and ThiS. FAD serves as cofactor.

It is found in the cytoplasm. It catalyses the reaction glycine + O2 + H2O = glyoxylate + H2O2 + NH4(+). The catalysed reaction is [ThiS sulfur-carrier protein]-C-terminal-Gly-aminoethanethioate + 2-iminoacetate + 1-deoxy-D-xylulose 5-phosphate = [ThiS sulfur-carrier protein]-C-terminal Gly-Gly + 2-[(2R,5Z)-2-carboxy-4-methylthiazol-5(2H)-ylidene]ethyl phosphate + 2 H2O + H(+). It functions in the pathway cofactor biosynthesis; thiamine diphosphate biosynthesis. Catalyzes the FAD-dependent oxidative deamination of glycine. Is essential for thiamine biosynthesis since the oxidation of glycine catalyzed by ThiO generates the glycine imine intermediate (dehydroglycine) required for the biosynthesis of the thiazole ring of thiamine pyrophosphate. In terms of biological role, catalyzes the rearrangement of 1-deoxy-D-xylulose 5-phosphate (DXP) to produce the thiazole phosphate moiety of thiamine. Sulfur is provided by the thiocarboxylate moiety of the carrier protein ThiS. In vitro, sulfur can be provided by H(2)S. The chain is Bifunctional protein ThiO/ThiG (thiO/thiG) from Trichormus variabilis (strain ATCC 29413 / PCC 7937) (Anabaena variabilis).